A 215-amino-acid polypeptide reads, in one-letter code: Short neuropeptide F (215 aa).

The N-terminal stretch at 1 to 22 (MCRINFTTLSLILVLWSGSLMS) is a signal peptide. A propeptide spanning residues 23–56 (EPSQNADGSIKGLYEYLLQREYAAPVSYADHQIK) is cleaved from the precursor. Phenylalanine amide occurs at positions 69 and 101. Residue Trp129 is modified to Tryptophan amide. Phe157 is subject to Phenylalanine amide. The propeptide occupies 160–215 (SDPSWAMFNEHQLDEQQFADATRQPSKTLRGDEPTSIESTEQVESEENSPSNMDEK). The disordered stretch occupies residues 173-215 (DEQQFADATRQPSKTLRGDEPTSIESTEQVESEENSPSNMDEK).

Belongs to the NPY family.

It is found in the secreted. Its function is as follows. Plays a role in controlling food intake and regulating body size. The sequence is that of Short neuropeptide F from Aedes aegypti (Yellowfever mosquito).